We begin with the raw amino-acid sequence, 241 residues long: Glutathione S-transferase omega-1 (241 aa).

N-acetylserine is present on S2. Residues 22 to 101 (GQIRVYSMRF…YLDEAYPEKK (80 aa)) form the GST N-terminal domain. The active-site Nucleophile is the C32. The residue at position 57 (K57) is an N6-acetyllysine. Glutathione is bound by residues K59, V72, and 85–86 (ES). A GST C-terminal domain is found at 106–228 (DPYEKACQKM…AKTYRDYLSL (123 aa)). S129 is modified (phosphoserine). 3 positions are modified to N6-acetyllysine: K143, K148, and K152.

This sequence belongs to the GST superfamily. Omega family. As to quaternary structure, homodimer.

It is found in the cytoplasm. The protein localises to the cytosol. The catalysed reaction is RX + glutathione = an S-substituted glutathione + a halide anion + H(+). It carries out the reaction L-dehydroascorbate + 2 glutathione = glutathione disulfide + L-ascorbate. The enzyme catalyses methylarsonate + 2 glutathione + H(+) = methylarsonous acid + glutathione disulfide + H2O. Exhibits glutathione-dependent thiol transferase and dehydroascorbate reductase activities. Has S-(phenacyl)glutathione reductase activity. Also has glutathione S-transferase activity. Participates in the biotransformation of inorganic arsenic and reduces monomethylarsonic acid (MMA) and dimethylarsonic acid. This chain is Glutathione S-transferase omega-1 (Gsto1), found in Rattus norvegicus (Rat).